We begin with the raw amino-acid sequence, 88 residues long: Small ribosomal subunit protein bS20 (88 aa).

It belongs to the bacterial ribosomal protein bS20 family.

Functionally, binds directly to 16S ribosomal RNA. The polypeptide is Small ribosomal subunit protein bS20 (Bartonella henselae (strain ATCC 49882 / DSM 28221 / CCUG 30454 / Houston 1) (Rochalimaea henselae)).